A 420-amino-acid polypeptide reads, in one-letter code: MFSPGQEEHCAPNKEPVKYGELVVLGYNGALPNGDRGRRKSRFALYKRPKANGVKPSTVHVISTPQASKAISCKGQHSISYTLSRNQTVVVEYTHDKDTDMFQVGRSTESPIDFVVTDTISGSQNTDEAQITQSTISRFACRIVCDRNEPYTARIFAAGFDSSKNIFLGEKAAKWKNPDGHMDGLTTNGVLVMHPRGGFTEESQPGVWREISVCGDVYTLRETRSAQQRGKLVESETNVLQDGSLIDLCGATLLWRTADGLFHTPTQKHIEALRQEINAARPQCPVGLNTLAFPSINRKEVVEEKQPWAYLSCGHVHGYHNWGHRSDTEANERECPMCRTVGPYVPLWLGCEAGFYVDAGPPTHAFTPCGHVCSEKSAKYWSQIPLPHGTHAFHAACPFCATQLVGEQNCIKLIFQGPID.

Positions glutamate 15–glutamate 202 constitute an FHA; atypical domain.

The protein belongs to the pellino family. Interacts with TRAF6, IRAK1, IRAK4 and MAP3K7. Interacts with BCL10; this interaction is impaired by SOCS3. Post-translationally, phosphorylated by IRAK1 and IRAK4 enhancing its E3 ligase activity.

The enzyme catalyses S-ubiquitinyl-[E2 ubiquitin-conjugating enzyme]-L-cysteine + [acceptor protein]-L-lysine = [E2 ubiquitin-conjugating enzyme]-L-cysteine + N(6)-ubiquitinyl-[acceptor protein]-L-lysine.. Its pathway is protein modification; protein ubiquitination. E3 ubiquitin ligase catalyzing the covalent attachment of ubiquitin moieties onto substrate proteins. Involved in the TLR and IL-1 signaling pathways via interaction with the complex containing IRAK kinases and TRAF6. Mediates IL1B-induced IRAK1 'Lys-63'-linked polyubiquitination and possibly 'Lys-48'-linked ubiquitination. May be important for LPS- and IL1B-induced MAP3K7-dependent, but not MAP3K3-dependent, NF-kappa-B activation. Can activate the MAP (mitogen activated protein) kinase pathway leading to activation of ELK1. The chain is E3 ubiquitin-protein ligase pellino homolog 2 (PELI2) from Homo sapiens (Human).